The sequence spans 531 residues: CTP synthase (531 aa).

An amidoligase domain region spans residues 1 to 264 (MPKFVVVTGG…GDFLVERLRL (264 aa)). Serine 13 lines the CTP pocket. Serine 13 serves as a coordination point for UTP. 14 to 19 (GLGKGV) contacts ATP. L-glutamine is bound at residue tyrosine 54. Residue aspartate 71 participates in ATP binding. Mg(2+)-binding residues include aspartate 71 and glutamate 139. CTP contacts are provided by residues 146 to 148 (DYE), 185 to 190 (KTKPLQ), and lysine 221. UTP-binding positions include 185-190 (KTKPLQ) and lysine 221. The Glutamine amidotransferase type-1 domain maps to 293–531 (CGKYVELPDA…LSAAVEQSRR (239 aa)). Glycine 351 lines the L-glutamine pocket. The active-site Nucleophile; for glutamine hydrolysis is the cysteine 378. L-glutamine-binding positions include 379–382 (FGMQ), glutamate 402, and arginine 459. Residues histidine 504 and glutamate 506 contribute to the active site.

It belongs to the CTP synthase family. Homotetramer.

It catalyses the reaction UTP + L-glutamine + ATP + H2O = CTP + L-glutamate + ADP + phosphate + 2 H(+). The catalysed reaction is L-glutamine + H2O = L-glutamate + NH4(+). The enzyme catalyses UTP + NH4(+) + ATP = CTP + ADP + phosphate + 2 H(+). It participates in pyrimidine metabolism; CTP biosynthesis via de novo pathway; CTP from UDP: step 2/2. With respect to regulation, allosterically activated by GTP, when glutamine is the substrate; GTP has no effect on the reaction when ammonia is the substrate. The allosteric effector GTP functions by stabilizing the protein conformation that binds the tetrahedral intermediate(s) formed during glutamine hydrolysis. Inhibited by the product CTP, via allosteric rather than competitive inhibition. Catalyzes the ATP-dependent amination of UTP to CTP with either L-glutamine or ammonia as the source of nitrogen. Regulates intracellular CTP levels through interactions with the four ribonucleotide triphosphates. This chain is CTP synthase, found in Pyrobaculum calidifontis (strain DSM 21063 / JCM 11548 / VA1).